The sequence spans 697 residues: Polyribonucleotide nucleotidyltransferase (697 aa).

Mg(2+)-binding residues include D489 and D495. The 60-residue stretch at 556–615 (PRIETIKIKPDKIREVIGSGGKVIRGITEATGVKIEIQDDGTINIASADPEATKKAIAMI) folds into the KH domain. An S1 motif domain is found at 625–693 (GKTYKGRIVK…RSGRVKLSRK (69 aa)).

It belongs to the polyribonucleotide nucleotidyltransferase family. Mg(2+) is required as a cofactor.

The protein resides in the cytoplasm. The catalysed reaction is RNA(n+1) + phosphate = RNA(n) + a ribonucleoside 5'-diphosphate. Involved in mRNA degradation. Catalyzes the phosphorolysis of single-stranded polyribonucleotides processively in the 3'- to 5'-direction. The chain is Polyribonucleotide nucleotidyltransferase from Bdellovibrio bacteriovorus (strain ATCC 15356 / DSM 50701 / NCIMB 9529 / HD100).